An 84-amino-acid polypeptide reads, in one-letter code: Small ribosomal subunit protein bS20 (84 aa).

The segment at 1-32 is disordered; the sequence is MPRHESAKKRMRQNEKRQKRNKSQKSRVRTKI.

Belongs to the bacterial ribosomal protein bS20 family.

In terms of biological role, binds directly to 16S ribosomal RNA. This is Small ribosomal subunit protein bS20 from Salinibacter ruber (strain DSM 13855 / M31).